The following is a 323-amino-acid chain: Lipoyl synthase (323 aa).

[4Fe-4S] cluster is bound by residues Cys-61, Cys-66, Cys-72, Cys-87, Cys-91, Cys-94, and Ser-303. The region spanning 73–292 (WTKKTATFLV…EQYGLSIGIP (220 aa)) is the Radical SAM core domain.

It belongs to the radical SAM superfamily. Lipoyl synthase family. [4Fe-4S] cluster serves as cofactor.

It is found in the cytoplasm. The catalysed reaction is [[Fe-S] cluster scaffold protein carrying a second [4Fe-4S](2+) cluster] + N(6)-octanoyl-L-lysyl-[protein] + 2 oxidized [2Fe-2S]-[ferredoxin] + 2 S-adenosyl-L-methionine + 4 H(+) = [[Fe-S] cluster scaffold protein] + N(6)-[(R)-dihydrolipoyl]-L-lysyl-[protein] + 4 Fe(3+) + 2 hydrogen sulfide + 2 5'-deoxyadenosine + 2 L-methionine + 2 reduced [2Fe-2S]-[ferredoxin]. It participates in protein modification; protein lipoylation via endogenous pathway; protein N(6)-(lipoyl)lysine from octanoyl-[acyl-carrier-protein]: step 2/2. Catalyzes the radical-mediated insertion of two sulfur atoms into the C-6 and C-8 positions of the octanoyl moiety bound to the lipoyl domains of lipoate-dependent enzymes, thereby converting the octanoylated domains into lipoylated derivatives. In Protochlamydia amoebophila (strain UWE25), this protein is Lipoyl synthase.